The chain runs to 117 residues: Large ribosomal subunit protein uL18 (117 aa).

Belongs to the universal ribosomal protein uL18 family. Part of the 50S ribosomal subunit; part of the 5S rRNA/L5/L18/L25 subcomplex. Contacts the 5S and 23S rRNAs.

This is one of the proteins that bind and probably mediate the attachment of the 5S RNA into the large ribosomal subunit, where it forms part of the central protuberance. The sequence is that of Large ribosomal subunit protein uL18 from Aster yellows witches'-broom phytoplasma (strain AYWB).